The following is a 177-amino-acid chain: Large ribosomal subunit protein uL6 (177 aa).

Belongs to the universal ribosomal protein uL6 family. Part of the 50S ribosomal subunit.

Functionally, this protein binds to the 23S rRNA, and is important in its secondary structure. It is located near the subunit interface in the base of the L7/L12 stalk, and near the tRNA binding site of the peptidyltransferase center. The polypeptide is Large ribosomal subunit protein uL6 (Citrobacter koseri (strain ATCC BAA-895 / CDC 4225-83 / SGSC4696)).